Reading from the N-terminus, the 249-residue chain is 5'-nucleotidase SurE (249 aa).

Asp-8, Asp-9, Ser-39, and Asn-91 together coordinate a divalent metal cation.

It belongs to the SurE nucleotidase family. Requires a divalent metal cation as cofactor.

It is found in the cytoplasm. The catalysed reaction is a ribonucleoside 5'-phosphate + H2O = a ribonucleoside + phosphate. Its function is as follows. Nucleotidase that shows phosphatase activity on nucleoside 5'-monophosphates. The polypeptide is 5'-nucleotidase SurE (Magnetococcus marinus (strain ATCC BAA-1437 / JCM 17883 / MC-1)).